The chain runs to 418 residues: Light-independent protochlorophyllide reductase subunit N (418 aa).

The [4Fe-4S] cluster site is built by C17, C42, and C103.

Belongs to the BchN/ChlN family. Protochlorophyllide reductase is composed of three subunits; ChlL, ChlN and ChlB. Forms a heterotetramer of two ChlB and two ChlN subunits. The cofactor is [4Fe-4S] cluster.

It catalyses the reaction chlorophyllide a + oxidized 2[4Fe-4S]-[ferredoxin] + 2 ADP + 2 phosphate = protochlorophyllide a + reduced 2[4Fe-4S]-[ferredoxin] + 2 ATP + 2 H2O. Its pathway is porphyrin-containing compound metabolism; chlorophyll biosynthesis (light-independent). Component of the dark-operative protochlorophyllide reductase (DPOR) that uses Mg-ATP and reduced ferredoxin to reduce ring D of protochlorophyllide (Pchlide) to form chlorophyllide a (Chlide). This reaction is light-independent. The NB-protein (ChlN-ChlB) is the catalytic component of the complex. The chain is Light-independent protochlorophyllide reductase subunit N from Prochlorococcus marinus (strain MIT 9215).